The primary structure comprises 630 residues: Golgin subfamily A member 8K (630 aa).

The interval 1–76 (MAEETQHNKL…TSSATLKDLE (76 aa)) is disordered. 2 coiled-coil regions span residues 86 to 148 (LDSR…LNTD) and 224 to 411 (LTQL…QQNQ). The segment covering 352-362 (KQEERIQEQHK) has biased composition (basic and acidic residues). Disordered stretches follow at residues 352–379 (KQEERIQEQHKSLQQLAKPQSVFEEPNN) and 424–444 (GEGHGEHLDSEGEEAPQPMPS).

This sequence belongs to the GOLGA8 family.

The polypeptide is Golgin subfamily A member 8K (Homo sapiens (Human)).